Reading from the N-terminus, the 214-residue chain is Protein-L-isoaspartate O-methyltransferase 1 (214 aa).

Residue Ser62 is part of the active site.

It belongs to the methyltransferase superfamily. L-isoaspartyl/D-aspartyl protein methyltransferase family.

Its subcellular location is the cytoplasm. It catalyses the reaction [protein]-L-isoaspartate + S-adenosyl-L-methionine = [protein]-L-isoaspartate alpha-methyl ester + S-adenosyl-L-homocysteine. Its function is as follows. Catalyzes the methyl esterification of L-isoaspartyl residues in peptides and proteins that result from spontaneous decomposition of normal L-aspartyl and L-asparaginyl residues. It plays a role in the repair and/or degradation of damaged proteins. In Syntrophobacter fumaroxidans (strain DSM 10017 / MPOB), this protein is Protein-L-isoaspartate O-methyltransferase 1.